Here is a 275-residue protein sequence, read N- to C-terminus: Membrane protein insertase YidC 1 (275 aa).

The signal sequence occupies residues 1-25; sequence MRKVLRVKKNIKIARIVPLVLLLVA. Residue cysteine 26 is the site of N-palmitoyl cysteine attachment. Residue cysteine 26 is the site of S-diacylglycerol cysteine attachment. Helical transmembrane passes span 58–78, 129–149, 171–191, 198–216, and 222–240; these read SIGVGIILFTLTIRLMLMPLF, YASLLPLLIQMPVMIALFQAL, LYLLPVLAAVFTFLSTWLTNL, VMMTVMIYVMPLMIFFMGF, and VVLYWTVSNAFQVVQLLLL.

The protein belongs to the OXA1/ALB3/YidC family. Type 2 subfamily.

It localises to the cell membrane. Its function is as follows. Required for the insertion and/or proper folding and/or complex formation of integral membrane proteins into the membrane. Involved in integration of membrane proteins that insert both dependently and independently of the Sec translocase complex, as well as at least some lipoproteins. The protein is Membrane protein insertase YidC 1 of Streptococcus pyogenes serotype M1.